Here is a 373-residue protein sequence, read N- to C-terminus: MNKKVALITGITGQDGSYLAEFLLEKGYEVHGIKRRSSLFNTQRVDHLYKDPHEEDVNFKLHYGDLTDSSNLTRILAEVQPDEVYNLGAQSHVAVSFQSPEYTADVDAIGTLRLLEAIRFLGLTKKTKFYQASTSELYGLVQEIPQKETTPFYPRSPYAVAKMYAYWITINYRESYGIYACNGILFNHESPRRGETFVTRKITRGMANIAQGLEKCLFMGNLDALRDWGHAKDYVKMQWMMLQQDEPRDFVIATGVQYSVREFIDMSARELGIELEFVGKGVDEKAVVKSVIGTKAPAIKVGDIIVAVDPAYFRPAEVETLLGDPSLAKKELGWVPEITLQQMVSEMVASDLEQAQSHALLKKHGYNVNVSVE.

Residues 10–15, 65–66, 87–91, and Tyr-102 each bind NADP(+); these read GITGQD, DL, and LGAQS. Thr-134 is an active-site residue. Catalysis depends on nucleophile residues Glu-136 and Tyr-158. Lys-162, His-188, and Arg-193 together coordinate NADP(+).

Belongs to the NAD(P)-dependent epimerase/dehydratase family. GDP-mannose 4,6-dehydratase subfamily. NADP(+) serves as cofactor.

The catalysed reaction is GDP-alpha-D-mannose = GDP-4-dehydro-alpha-D-rhamnose + H2O. Catalyzes the conversion of GDP-D-mannose to GDP-4-dehydro-6-deoxy-D-mannose. The polypeptide is GDP-mannose 4,6-dehydratase (Vibrio cholerae serotype O1 (strain ATCC 39315 / El Tor Inaba N16961)).